The sequence spans 126 residues: Large ribosomal subunit protein uL22 (126 aa).

It belongs to the universal ribosomal protein uL22 family. As to quaternary structure, part of the 50S ribosomal subunit.

Its function is as follows. This protein binds specifically to 23S rRNA; its binding is stimulated by other ribosomal proteins, e.g. L4, L17, and L20. It is important during the early stages of 50S assembly. It makes multiple contacts with different domains of the 23S rRNA in the assembled 50S subunit and ribosome. The globular domain of the protein is located near the polypeptide exit tunnel on the outside of the subunit, while an extended beta-hairpin is found that lines the wall of the exit tunnel in the center of the 70S ribosome. This Ruegeria sp. (strain TM1040) (Silicibacter sp.) protein is Large ribosomal subunit protein uL22.